We begin with the raw amino-acid sequence, 417 residues long: Gamma-glutamyl phosphate reductase (417 aa).

The protein belongs to the gamma-glutamyl phosphate reductase family.

The protein localises to the cytoplasm. It catalyses the reaction L-glutamate 5-semialdehyde + phosphate + NADP(+) = L-glutamyl 5-phosphate + NADPH + H(+). The protein operates within amino-acid biosynthesis; L-proline biosynthesis; L-glutamate 5-semialdehyde from L-glutamate: step 2/2. Catalyzes the NADPH-dependent reduction of L-glutamate 5-phosphate into L-glutamate 5-semialdehyde and phosphate. The product spontaneously undergoes cyclization to form 1-pyrroline-5-carboxylate. The sequence is that of Gamma-glutamyl phosphate reductase from Hydrogenovibrio crunogenus (strain DSM 25203 / XCL-2) (Thiomicrospira crunogena).